Consider the following 381-residue polypeptide: Opsin Rh2 (381 aa).

Over 1–56 (MERSLLPEPPLAMALLGPRFEAQTGGNRSVLDNVLPDMAPLVNPYWSRFAPMDPTM) the chain is Extracellular. An N-linked (GlcNAc...) asparagine glycan is attached at asparagine 27. A helical membrane pass occupies residues 57-81 (SKILGLFTLVILIISCCGNGVVVYI). At 82 to 93 (FGGTKSLRTPAN) the chain is on the cytoplasmic side. Residues 94–119 (LLVLNLAFSDFCMMASQSPVMIINFY) traverse the membrane as a helical segment. Topologically, residues 120 to 133 (YETWVLGPLWCDIY) are extracellular. A disulfide bridge connects residues cysteine 130 and cysteine 207. A helical transmembrane segment spans residues 134–153 (AACGSLFGCVSIWSMCMIAF). Topologically, residues 154–172 (DRYNVIVKGINGTPMTIKT) are cytoplasmic. A helical membrane pass occupies residues 173–196 (SIMKIAFIWMMAVFWTIMPLIGWS). The Extracellular segment spans residues 197–220 (SYVPEGNLTACSIDYMTRQWNPRS). A helical membrane pass occupies residues 221-248 (YLITYSLFVYYTPLFMICYSYWFIIATV). At 249-283 (AAHEKAMRDQAKKMNVKSLRSSEDCDKSAENKLAK) the chain is on the cytoplasmic side. The helical transmembrane segment at 284–307 (VALTTISLWFMAWTPYLIICYFGL) threads the bilayer. At 308 to 314 (FKIDGLT) the chain is on the extracellular side. Residues 315 to 339 (PLTTIWGATFAKTSAVYNPIVYGIS) form a helical membrane-spanning segment. Lysine 326 is subject to N6-(retinylidene)lysine. The Cytoplasmic portion of the chain corresponds to 340–381 (HPKYRLVLKEKCPMCVCGSTDEPKPDAPPSDTETTSEAESKA). The segment at 358–381 (STDEPKPDAPPSDTETTSEAESKA) is disordered. The segment covering 370-381 (DTETTSEAESKA) has biased composition (polar residues).

This sequence belongs to the G-protein coupled receptor 1 family. Opsin subfamily. Post-translationally, some or all of the Ser/Thr residues present in the C-terminal part may be phosphorylated.

Its subcellular location is the membrane. Visual pigments are the light-absorbing molecules that mediate vision. They consist of an apoprotein, opsin, covalently linked to cis-retinal. This Drosophila pseudoobscura pseudoobscura (Fruit fly) protein is Opsin Rh2 (Rh2).